The chain runs to 92 residues: Small ribosomal subunit protein uS19 (92 aa).

This sequence belongs to the universal ribosomal protein uS19 family.

In terms of biological role, protein S19 forms a complex with S13 that binds strongly to the 16S ribosomal RNA. The protein is Small ribosomal subunit protein uS19 of Novosphingobium aromaticivorans (strain ATCC 700278 / DSM 12444 / CCUG 56034 / CIP 105152 / NBRC 16084 / F199).